The primary structure comprises 154 residues: SsrA-binding protein (154 aa).

The protein belongs to the SmpB family.

It is found in the cytoplasm. Required for rescue of stalled ribosomes mediated by trans-translation. Binds to transfer-messenger RNA (tmRNA), required for stable association of tmRNA with ribosomes. tmRNA and SmpB together mimic tRNA shape, replacing the anticodon stem-loop with SmpB. tmRNA is encoded by the ssrA gene; the 2 termini fold to resemble tRNA(Ala) and it encodes a 'tag peptide', a short internal open reading frame. During trans-translation Ala-aminoacylated tmRNA acts like a tRNA, entering the A-site of stalled ribosomes, displacing the stalled mRNA. The ribosome then switches to translate the ORF on the tmRNA; the nascent peptide is terminated with the 'tag peptide' encoded by the tmRNA and targeted for degradation. The ribosome is freed to recommence translation, which seems to be the essential function of trans-translation. This chain is SsrA-binding protein, found in Enterococcus faecalis (strain ATCC 700802 / V583).